A 166-amino-acid polypeptide reads, in one-letter code: Lipoprotein signal peptidase (166 aa).

The next 3 helical transmembrane spans lie at 12 to 32 (WLWL…LILQ), 70 to 90 (WFFA…MYRA), and 102 to 122 (ALII…GFVV). Residues Asp123 and Asp141 contribute to the active site. The helical transmembrane segment at 142–162 (SAICFGAAMIVLEGFLPNAAA) threads the bilayer.

The protein belongs to the peptidase A8 family.

The protein localises to the cell inner membrane. The catalysed reaction is Release of signal peptides from bacterial membrane prolipoproteins. Hydrolyzes -Xaa-Yaa-Zaa-|-(S,diacylglyceryl)Cys-, in which Xaa is hydrophobic (preferably Leu), and Yaa (Ala or Ser) and Zaa (Gly or Ala) have small, neutral side chains.. Its pathway is protein modification; lipoprotein biosynthesis (signal peptide cleavage). Its function is as follows. This protein specifically catalyzes the removal of signal peptides from prolipoproteins. In Enterobacter sp. (strain 638), this protein is Lipoprotein signal peptidase.